The primary structure comprises 240 residues: tRNA pseudouridine synthase B (240 aa).

The active-site Nucleophile is aspartate 54.

This sequence belongs to the pseudouridine synthase TruB family. Type 1 subfamily.

The catalysed reaction is uridine(55) in tRNA = pseudouridine(55) in tRNA. In terms of biological role, responsible for synthesis of pseudouridine from uracil-55 in the psi GC loop of transfer RNAs. In Chlorobium phaeovibrioides (strain DSM 265 / 1930) (Prosthecochloris vibrioformis (strain DSM 265)), this protein is tRNA pseudouridine synthase B.